A 631-amino-acid chain; its full sequence is MSQTNSHGEAAGTAKPIGLLIAAVGVVYGDIGTSPLYTLKEVFQGGYGVEVTHDAILGVLSLIFWSLIWVVSFKYMAFVLRADNQGEGGIMALMALARRASAKHPKLQMMMVVFGLFGAALFYGDSMITPAVSVLSAMEGLELAFDGLDHWIVPMALIVLVGLFLIQRHGTARIGVLFGPVMVTWFLVLGALGVYGIMQSPEVLKAVNPAWGVNFFIIHPGIGVAILGAVVLALTGAEALYADMGHFGRKPISRAWFILVLPALLLNYFGQGALVLGNPETVRNPFYLLAPGWALLPLIGLSTMATIIASQAVISGAFSMTLQAIQLGYIPRMHIQHTSSDAQGQIYIGAVNWALMAGVILLVIGFESSGALASAYGVAVTGTMLCTTILVSTVMLMLWKWPPLLAVPLLICLLLVDGLFFAANVPKIFQGGAFPVLAGAVLFILMTTWKRGKQLLAERIDEGGLPLPIFISSIRVQPPHRVQGTAVFLTARSDAVPHALLHNMLHNQVLHEQVVLLTVVYEDSPRVPAAQRVEVESYGEGFYRVILHFGFIDEPDVPAALALCDLPELDFSPMRTTYFLSRETVIPSKMDGMARWREALFAFMLKNANGNLRFFKLPFNRVIELGTQVEM.

Transmembrane regions (helical) follow at residues 17-37 (IGLL…SPLY), 56-76 (ILGV…FKYM), 109-129 (MMMV…SMIT), 147-167 (GLDH…FLIQ), 174-194 (IGVL…ALGV), 215-235 (FFII…LALT), 256-276 (WFIL…ALVL), 288-308 (LLAP…ATII), 346-366 (IYIG…VIGF), 378-398 (VAVT…MLML), 403-423 (PLLA…FFAA), and 428-448 (IFQG…LMTT).

It belongs to the HAK/KUP transporter (TC 2.A.72) family.

The protein resides in the cell inner membrane. The enzyme catalyses K(+)(in) + H(+)(in) = K(+)(out) + H(+)(out). Transport of potassium into the cell. Likely operates as a K(+):H(+) symporter. The polypeptide is Probable potassium transport system protein Kup (Pseudomonas savastanoi pv. phaseolicola (strain 1448A / Race 6) (Pseudomonas syringae pv. phaseolicola (strain 1448A / Race 6))).